A 666-amino-acid chain; its full sequence is MIAANPTDLEVYLFHEGRLYQSYELFGAHVIRGGGAVGTRFCVWAPHAREVRLVGSFNDWNGTNSPLTKVNDEGVWTIVVPENLEGHLYKYEIITPDGRVLLKADPYAFYSELRPHTASIVYDLKGYEWNDSPWQRKKRRKRIYDQPMVIYELHFGSWKKKPDGRFYTYREMADELIPYVLERGFTHIELLPLVEHPLDRSWGYQGTGYYSVTSRYGTPHDFMYFVDRCHQAGLGVIIDWVPGHFCKDAHGLYMFDGAPTYEYANEKDRENYVWGTANFDLGKPEVRSFLISNALFWLEYYHVDGFRVDAVANMLYWPNNDRLYENPYAVEFLRQLNEAVFAYDPNVWMIAEDSTDWPRVTAPTYDGGLGFNYKWNMGWMNDMLKYMETPPHERKYAHNQVSFSLLYAYSENFILPFSHDEVVHGKKSLLNKMPGSYEEKFAQLRLLYGYMMAHPGKKLLFMGSEFAQFDEWKFAEELDWVLFDFELHRKMDEYVKQLIACYKRYKPFYELDHDPRGFEWIDVHNAEQSIFSFIRRGKKEGDVLVIVCNFTNQAYDDYKVSVPLLAPYREVLNSDAAEFGGSGHVNGKRLPAFSEPFHGKPYHVRMTIPPFGISILRPVQKRGERKQNEEEVHRHVIGRRARKPASLADEKHRETSRAVWGEVPDH.

The active-site Nucleophile is the D309. E352 (proton donor) is an active-site residue. The segment covering 622-634 (RGERKQNEEEVHR) has biased composition (basic and acidic residues). The segment at 622–666 (RGERKQNEEEVHRHVIGRRARKPASLADEKHRETSRAVWGEVPDH) is disordered.

This sequence belongs to the glycosyl hydrolase 13 family. GlgB subfamily. As to quaternary structure, monomer.

It carries out the reaction Transfers a segment of a (1-&gt;4)-alpha-D-glucan chain to a primary hydroxy group in a similar glucan chain.. Its pathway is glycan biosynthesis; glycogen biosynthesis. Catalyzes the formation of the alpha-1,6-glucosidic linkages in glycogen by scission of a 1,4-alpha-linked oligosaccharide from growing alpha-1,4-glucan chains and the subsequent attachment of the oligosaccharide to the alpha-1,6 position. This is 1,4-alpha-glucan branching enzyme GlgB (glgB) from Bacillus caldolyticus.